Reading from the N-terminus, the 85-residue chain is U4-theraphotoxin-Hhn1a (85 aa).

Residues 1 to 22 (MKVTLIAILTCAAALVLHTTAA) form the signal peptide. The propeptide occupies 23–48 (EELEAESQLMEVGMPDTELAAVDEER). Intrachain disulfides connect Cys-52-Cys-66, Cys-56-Cys-77, and Cys-71-Cys-82.

Belongs to the neurotoxin 12 (Hwtx-2) family. 02 (Hwtx-2) subfamily. Monomer. Expressed by the venom gland.

The protein localises to the secreted. Its function is as follows. Neurotoxin active on both insects and mammals. This Cyriopagopus hainanus (Chinese bird spider) protein is U4-theraphotoxin-Hhn1a.